Here is a 343-residue protein sequence, read N- to C-terminus: L-threonine 3-dehydrogenase (343 aa).

Cys38 contacts Zn(2+). Catalysis depends on charge relay system residues Thr40 and His43. Zn(2+) is bound by residues His63, Glu64, Cys93, Cys96, Cys99, and Cys107. NAD(+) is bound by residues Ile175, Asp195, Arg200, Leu262–Ile264, and Ile286–Tyr287.

Belongs to the zinc-containing alcohol dehydrogenase family. As to quaternary structure, homotetramer. Zn(2+) serves as cofactor.

The protein resides in the cytoplasm. It catalyses the reaction L-threonine + NAD(+) = (2S)-2-amino-3-oxobutanoate + NADH + H(+). It functions in the pathway amino-acid degradation; L-threonine degradation via oxydo-reductase pathway; glycine from L-threonine: step 1/2. Functionally, catalyzes the NAD(+)-dependent oxidation of L-threonine to 2-amino-3-ketobutyrate. The chain is L-threonine 3-dehydrogenase from Burkholderia thailandensis (strain ATCC 700388 / DSM 13276 / CCUG 48851 / CIP 106301 / E264).